A 606-amino-acid polypeptide reads, in one-letter code: Sulfite reductase [NADPH] flavoprotein alpha-component (606 aa).

The region spanning 64–202 (VTLISASQTG…QAQQWRQQVV (139 aa)) is the Flavodoxin-like domain. Residues 70 to 75 (SQTGNA), 117 to 120 (STQG), and 153 to 162 (LGDTSYEHFC) contribute to the FMN site. Positions 212–234 (QSTAPTQSTTPAAAAITSGGTTT) are enriched in low complexity. The interval 212–235 (QSTAPTQSTTPAAAAITSGGTTTV) is disordered. Residues 241 to 455 (TAPLTAQLSV…IEHNDNFRLP (215 aa)) enclose the FAD-binding FR-type domain. Residues Thr329, Lys363, 393–396 (RLYS), 411–413 (TVG), Tyr417, and 426–429 (GGAS) each bind FAD. Residues 526–527 (SR), 532–536 (KIYVQ), and Asp568 contribute to the NADP(+) site. Tyr606 contributes to the FAD binding site.

This sequence belongs to the NADPH-dependent sulphite reductase flavoprotein subunit CysJ family. The protein in the N-terminal section; belongs to the flavodoxin family. It in the C-terminal section; belongs to the flavoprotein pyridine nucleotide cytochrome reductase family. As to quaternary structure, alpha(8)-beta(8). The alpha component is a flavoprotein, the beta component is a hemoprotein. It depends on FAD as a cofactor. FMN serves as cofactor.

It carries out the reaction hydrogen sulfide + 3 NADP(+) + 3 H2O = sulfite + 3 NADPH + 4 H(+). Its pathway is sulfur metabolism; hydrogen sulfide biosynthesis; hydrogen sulfide from sulfite (NADPH route): step 1/1. In terms of biological role, component of the sulfite reductase complex that catalyzes the 6-electron reduction of sulfite to sulfide. This is one of several activities required for the biosynthesis of L-cysteine from sulfate. The flavoprotein component catalyzes the electron flow from NADPH -&gt; FAD -&gt; FMN to the hemoprotein component. The polypeptide is Sulfite reductase [NADPH] flavoprotein alpha-component (Yersinia pestis bv. Antiqua (strain Antiqua)).